The primary structure comprises 206 residues: Thymidylate kinase (206 aa).

10–17 (GVDGVGKT) contacts ATP.

The protein belongs to the thymidylate kinase family.

It carries out the reaction dTMP + ATP = dTDP + ADP. Its function is as follows. Phosphorylation of dTMP to form dTDP in both de novo and salvage pathways of dTTP synthesis. This Bifidobacterium longum (strain NCC 2705) protein is Thymidylate kinase.